The chain runs to 368 residues: Quinolinate synthase (368 aa).

Iminosuccinate is bound by residues histidine 46 and serine 63. Cysteine 110 lines the [4Fe-4S] cluster pocket. Iminosuccinate contacts are provided by residues 141–143 (YVN) and serine 162. Cysteine 230 is a [4Fe-4S] cluster binding site. Residues 256–258 (HPE) and threonine 273 contribute to the iminosuccinate site. Residue cysteine 320 coordinates [4Fe-4S] cluster.

It belongs to the quinolinate synthase family. Type 3 subfamily. [4Fe-4S] cluster is required as a cofactor.

Its subcellular location is the cytoplasm. The enzyme catalyses iminosuccinate + dihydroxyacetone phosphate = quinolinate + phosphate + 2 H2O + H(+). Its pathway is cofactor biosynthesis; NAD(+) biosynthesis; quinolinate from iminoaspartate: step 1/1. In terms of biological role, catalyzes the condensation of iminoaspartate with dihydroxyacetone phosphate to form quinolinate. The sequence is that of Quinolinate synthase from Bacillus cereus (strain G9842).